Here is a 439-residue protein sequence, read N- to C-terminus: NAD kinase (439 aa).

Serine 46, serine 48, serine 50, serine 55, and serine 64 each carry phosphoserine.

The protein belongs to the NAD kinase family. A divalent metal cation is required as a cofactor.

The enzyme catalyses NAD(+) + ATP = ADP + NADP(+) + H(+). The protein is NAD kinase (Nadk) of Mus musculus (Mouse).